The primary structure comprises 414 residues: Small ribosomal subunit protein mS46 (414 aa).

Residues Leu20–Arg35 show a composition bias toward polar residues. 2 disordered regions span residues Leu20 to Val71 and Ala168 to Pro229. 2 stretches are compositionally biased toward low complexity: residues Pro45–Pro59 and Ala168–Ala200. Residues Pro205–Asp224 are compositionally biased toward basic and acidic residues.

This sequence belongs to the mitochondrion-specific ribosomal protein mS46 family. Component of the mitochondrial small ribosomal subunit (mt-SSU). Mature N.crassa 74S mitochondrial ribosomes consist of a small (37S) and a large (54S) subunit. The 37S small subunit contains a 16S ribosomal RNA (16S mt-rRNA) and 32 different proteins. The 54S large subunit contains a 23S rRNA (23S mt-rRNA) and 42 different proteins.

It is found in the mitochondrion. Its function is as follows. Component of the mitochondrial ribosome (mitoribosome), a dedicated translation machinery responsible for the synthesis of mitochondrial genome-encoded proteins, including at least some of the essential transmembrane subunits of the mitochondrial respiratory chain. The mitoribosomes are attached to the mitochondrial inner membrane and translation products are cotranslationally integrated into the membrane. The sequence is that of Small ribosomal subunit protein mS46 (rsm28) from Neurospora crassa (strain ATCC 24698 / 74-OR23-1A / CBS 708.71 / DSM 1257 / FGSC 987).